Here is a 188-residue protein sequence, read N- to C-terminus: Ribosomal RNA small subunit methyltransferase G (188 aa).

Residues Gly69, Phe74, 119-120 (VQ), and Arg134 each bind S-adenosyl-L-methionine.

The protein belongs to the methyltransferase superfamily. RNA methyltransferase RsmG family.

The protein localises to the cytoplasm. It carries out the reaction guanosine(527) in 16S rRNA + S-adenosyl-L-methionine = N(7)-methylguanosine(527) in 16S rRNA + S-adenosyl-L-homocysteine. Its function is as follows. Specifically methylates the N7 position of guanine in position 527 of 16S rRNA. This chain is Ribosomal RNA small subunit methyltransferase G, found in Campylobacter jejuni subsp. doylei (strain ATCC BAA-1458 / RM4099 / 269.97).